Reading from the N-terminus, the 303-residue chain is GTPase Era (303 aa).

The Era-type G domain maps to 9–176; sequence KSGFVSIIGR…VEQIVEHMEE (168 aa). Residues 17 to 24 are G1; sequence GRPNVGKS. 17 to 24 is a binding site for GTP; that stretch reads GRPNVGKS. The interval 43–47 is G2; the sequence is QTTRN. A G3 region spans residues 64-67; sequence DTPG. GTP is bound by residues 64 to 68 and 126 to 129; these read DTPGI and NKID. Residues 126–129 form a G4 region; the sequence is NKID. A G5 region spans residues 155-157; it reads ISA. In terms of domain architecture, KH type-2 spans 199–284; that stretch reads IREKVLHLTK…YLELWVKVQK (86 aa).

The protein belongs to the TRAFAC class TrmE-Era-EngA-EngB-Septin-like GTPase superfamily. Era GTPase family. Monomer.

It is found in the cytoplasm. Its subcellular location is the cell membrane. Its function is as follows. An essential GTPase that binds both GDP and GTP, with rapid nucleotide exchange. Plays a role in 16S rRNA processing and 30S ribosomal subunit biogenesis and possibly also in cell cycle regulation and energy metabolism. This Shouchella clausii (strain KSM-K16) (Alkalihalobacillus clausii) protein is GTPase Era.